The following is a 244-amino-acid chain: MSGCRILLDAGNSSLKWAVVEDGTWLARGRSDYSDLSAVEAELDAGSECFIASVASRVYEEKLAALLTAAGCSAVWLKSEAAFDDVTNDYRDPTQLGVDRWMGLVAARARRRAPTLVVSAGTAMTVDALSGDGSFLGGLIVPGVALMQRSLQQGTAGGAAAGGAWQAFPRCTADAAYSGIIAALCGAVEGQHVRLAAHEGISPACLITGGGAETLLPHLGVDAEHVPTLVLEGIERVARAGGRG.

Residue 9–16 (DAGNSSLK) participates in ATP binding. Substrate contacts are provided by residues Tyr90 and 97 to 100 (GVDR). Asp99 functions as the Proton acceptor in the catalytic mechanism. Residue Thr122 participates in ATP binding. Thr172 serves as a coordination point for substrate.

Belongs to the type III pantothenate kinase family. Homodimer. Requires NH4(+) as cofactor. K(+) is required as a cofactor.

It is found in the cytoplasm. It carries out the reaction (R)-pantothenate + ATP = (R)-4'-phosphopantothenate + ADP + H(+). It functions in the pathway cofactor biosynthesis; coenzyme A biosynthesis; CoA from (R)-pantothenate: step 1/5. Its function is as follows. Catalyzes the phosphorylation of pantothenate (Pan), the first step in CoA biosynthesis. This Thiobacillus denitrificans (strain ATCC 25259 / T1) protein is Type III pantothenate kinase.